Reading from the N-terminus, the 132-residue chain is Small ribosomal subunit protein uS8 (132 aa).

The protein belongs to the universal ribosomal protein uS8 family. Part of the 30S ribosomal subunit. Contacts proteins S5 and S12.

Its function is as follows. One of the primary rRNA binding proteins, it binds directly to 16S rRNA central domain where it helps coordinate assembly of the platform of the 30S subunit. The chain is Small ribosomal subunit protein uS8 from Xylella fastidiosa (strain M12).